A 487-amino-acid chain; its full sequence is WD-40 repeat-containing protein MSI5 (487 aa).

Met-1 bears the N-acetylmethionine mark. Over residues 1-12 (MESEAAATVQAT) the composition is skewed to low complexity. Positions 1 to 44 (MESEAAATVQATRPRRAPRTPVTAILTDKRRRKPKSNNESQLPF) are disordered. Residues 14–21 (PRRAPRTP) carry the Nuclear localization signal motif. WD repeat units follow at residues 142–182 (IHPG…DRYA), 197–237 (GHQD…TMAG), 270–310 (GHKD…SPAM), 315–355 (AHDA…SNGV), 364–404 (GHRA…KKSE), and 419–466 (GHRD…YRPE). A disordered region spans residues 236–268 (AGSDSKSPGSSFKQTGEGSDKTGGPSVGPRGIY). Residues 237–252 (GSDSKSPGSSFKQTGE) are compositionally biased toward polar residues. The DWD box motif lies at 288 to 303 (FCSVGDDSCLMLWDAR).

The protein belongs to the WD repeat RBAP46/RBAP48/MSI1 family. Interacts with AHL16. Interacts with LHP1, PDP2, PDP3 and PDP6. Component of the PRC2 (polycomb repressive complex 2) complex which regulates histone methylation on histone H3K27.

The protein resides in the nucleus. Core histone-binding subunit that may target chromatin assembly factors, chromatin remodeling factors and histone deacetylases to their histone substrates in a manner that is regulated by nucleosomal DNA. Acts together with PDP1 and MSI4/FVE to regulate the function of the PRC2 complex on FLC. The chain is WD-40 repeat-containing protein MSI5 from Arabidopsis thaliana (Mouse-ear cress).